The primary structure comprises 37 residues: Large ribosomal subunit protein bL36c (37 aa).

Belongs to the bacterial ribosomal protein bL36 family.

The protein resides in the plastid. Its subcellular location is the chloroplast. The polypeptide is Large ribosomal subunit protein bL36c (Chaetosphaeridium globosum (Charophycean green alga)).